Consider the following 207-residue polypeptide: MFISFEGCEGTGKTTHSSYLFEKLSKKYSCVLTKEPGGGLFNEVIRNILLHSYNKQIDFHTEALLFAADRAEHLSKLIIPALQQNKIVICDRYLDSTIAYQVYARGLSKDFVLNINNLALNYMPNITFYLDLDPKIGIQRVKQFRPKEINSFDLQKLSFHKKVRKGYLDLYQKDQQKRIFLIDASKSLEKIYNIIEQKLKEVFQIDL.

ATP is bound at residue 7 to 14 (GCEGTGKT).

The protein belongs to the thymidylate kinase family.

It catalyses the reaction dTMP + ATP = dTDP + ADP. In terms of biological role, phosphorylation of dTMP to form dTDP in both de novo and salvage pathways of dTTP synthesis. The polypeptide is Thymidylate kinase (Aster yellows witches'-broom phytoplasma (strain AYWB)).